A 103-amino-acid polypeptide reads, in one-letter code: Small ribosomal subunit protein uS10 (103 aa).

The protein belongs to the universal ribosomal protein uS10 family. In terms of assembly, part of the 30S ribosomal subunit.

Involved in the binding of tRNA to the ribosomes. The chain is Small ribosomal subunit protein uS10 from Baumannia cicadellinicola subsp. Homalodisca coagulata.